The chain runs to 1653 residues: Ciliary rootlet coiled-coil protein 2 (1653 aa).

The segment covering 1-17 has biased composition (polar residues); it reads MSSASSEPGNGDASQQP. A disordered region spans residues 1 to 57; that stretch reads MSSASSEPGNGDASQQPLLGLDTVIQRLEDTILSPTASREDRALTVRGEGRQASPTP. Over residues 38–50 the composition is skewed to basic and acidic residues; the sequence is SREDRALTVRGEG. Coiled coils occupy residues 86–145 and 310–351; these read VARV…SELE and KVAL…LVAQ. The interval 367-396 is disordered; it reads LGEPRRPLRSPQRATSPHQGASPPHICSPA. Residues 423-1215 adopt a coiled-coil conformation; that stretch reads LKSSQALVAS…QRKLAEVEAA (793 aa). The disordered stretch occupies residues 1302 to 1356; sequence GLQRQSPWASPEQPGSPTKGSDSSQALPGQQGTSPPARPHSPLRWPSPTPGGRSS. The span at 1304–1335 shows a compositional bias: polar residues; it reads QRQSPWASPEQPGSPTKGSDSSQALPGQQGTS. The stretch at 1361-1570 forms a coiled coil; it reads VATVQDILRD…QAQMTEMEQA (210 aa).

Belongs to the rootletin family.

This Homo sapiens (Human) protein is Ciliary rootlet coiled-coil protein 2.